A 365-amino-acid chain; its full sequence is Succinyl-diaminopimelate desuccinylase (365 aa).

Residue His64 coordinates Zn(2+). The active site involves Asp66. A Zn(2+)-binding site is contributed by Asp95. The Proton acceptor role is filled by Glu125. Zn(2+) is bound by residues Glu126, Glu154, and His339.

It belongs to the peptidase M20A family. DapE subfamily. As to quaternary structure, homodimer. The cofactor is Zn(2+). Requires Co(2+) as cofactor.

It carries out the reaction N-succinyl-(2S,6S)-2,6-diaminopimelate + H2O = (2S,6S)-2,6-diaminopimelate + succinate. It functions in the pathway amino-acid biosynthesis; L-lysine biosynthesis via DAP pathway; LL-2,6-diaminopimelate from (S)-tetrahydrodipicolinate (succinylase route): step 3/3. Functionally, catalyzes the hydrolysis of N-succinyl-L,L-diaminopimelic acid (SDAP), forming succinate and LL-2,6-diaminopimelate (DAP), an intermediate involved in the bacterial biosynthesis of lysine and meso-diaminopimelic acid, an essential component of bacterial cell walls. The chain is Succinyl-diaminopimelate desuccinylase from Sulfurimonas denitrificans (strain ATCC 33889 / DSM 1251) (Thiomicrospira denitrificans (strain ATCC 33889 / DSM 1251)).